Here is a 515-residue protein sequence, read N- to C-terminus: Meiotically up-regulated gene 68 protein (515 aa).

Residues 165 to 204 (LHSIESERNESSLSLDSGESEKKSEEDNGNGEQNYIPEQY) form a disordered region.

In terms of biological role, has a role in meiosis. This Schizosaccharomyces pombe (strain 972 / ATCC 24843) (Fission yeast) protein is Meiotically up-regulated gene 68 protein (mug68).